The chain runs to 2213 residues: Protein sidekick-1 (2213 aa).

Residues 1 to 73 are disordered; it reads MARGARPSAA…GAGRCGGRRA (73 aa). Residues 23–38 are compositionally biased toward low complexity; that stretch reads AGPGRPRGSPPGRARP. Ig-like C2-type domains follow at residues 104 to 186, 191 to 277, 293 to 378, 386 to 476, and 480 to 569; these read PYFK…SEVQ, GSFM…SPFI, PTIV…RATA, PYFT…LDVT, and PVFT…ATLT. A disulfide bridge connects residues cysteine 126 and cysteine 169. N-linked (GlcNAc...) asparagine glycosylation is found at asparagine 271 and asparagine 301. Cystine bridges form between cysteine 315-cysteine 362, cysteine 408-cysteine 458, and cysteine 501-cysteine 553. N-linked (GlcNAc...) asparagine glycans are attached at residues asparagine 550, asparagine 563, and asparagine 572. Residues 574–663 form the Ig-like C2-type 6 domain; that stretch reads TSIVHPPEDH…GNDSRMARLE (90 aa). A disulfide bond links cysteine 595 and cysteine 647. Residues asparagine 655, asparagine 679, asparagine 782, asparagine 821, asparagine 882, asparagine 1015, and asparagine 1024 are each glycosylated (N-linked (GlcNAc...) asparagine). Fibronectin type-III domains lie at 670–766, 771–867, 872–970, 974–1068, 1072–1171, 1176–1274, 1279–1376, 1380–1474, 1479–1576, 1581–1699, 1704–1800, 1804–1899, and 1902–2000; these read SPQN…LPEE, PPKN…TLQG, PPQN…TQED, AVGH…VPPD, APSN…TLQA, APTS…TRES, APEN…TKDD, PPVR…TEKR, PPRE…TLQD, PPGS…VGEA, APQN…THQA, APSF…AGPA, and SPGS…SAQV. N-linked (GlcNAc...) asparagine glycosylation is found at asparagine 1282 and asparagine 1333. Asparagine 1654, asparagine 1748, asparagine 1767, asparagine 1819, and asparagine 1893 each carry an N-linked (GlcNAc...) asparagine glycan. Residues 2010–2030 traverse the membrane as a helical segment; sequence FLLVMALSSLIVILLVVFALV. The Cytoplasmic portion of the chain corresponds to 2031–2213; the sequence is LHGQNKKYKN…TPLTGFSSFV (183 aa). Residues 2075–2098 form a disordered region; the sequence is STFSKKNGTRSPPRPSPGGLHYSD. The short motif at 2207–2213 is the PDZ-binding element; it reads TGFSSFV.

It belongs to the sidekick family. Homodimer; mediates homophilic interactions to promote cell adhesion. Up-regulated in glomeruli in HIV-associated nephropathy. In diseased glomeruli, significantly overexpressed and the expression is no longer restricted to mesangial cells but includes podocytes and parietal epithelial cells.

The protein localises to the cell membrane. Its subcellular location is the synapse. In terms of biological role, adhesion molecule that promotes lamina-specific synaptic connections in the retina. Expressed in specific subsets of interneurons and retinal ganglion cells (RGCs) and promotes synaptic connectivity via homophilic interactions. This is Protein sidekick-1 from Homo sapiens (Human).